The chain runs to 476 residues: Probable isoprenylcysteine alpha-carbonyl methylesterase ICMEL1 (476 aa).

A compositionally biased stretch (polar residues) spans 92 to 104; sequence NCLSAFSDDTNGT. Residues 92–116 are disordered; it reads NCLSAFSDDTNGTADGGNNSGDRQT. 2 helical membrane passes run 153-173 and 208-228; these read FMAL…VGYY and VVAF…GSLL. Substrate is bound by residues 214–216 and 285–287; these read GGA and QSA. Catalysis depends on residues Ser286, Asp388, and His420.

The protein belongs to the AB hydrolase superfamily. Isoprenylcysteine methylesterase family. As to expression, expressed in roots, rosette and cauline leaves, stems, flowers and siliques.

The protein resides in the endoplasmic reticulum membrane. It localises to the golgi apparatus membrane. The catalysed reaction is [protein]-C-terminal S-[(2E,6E)-farnesyl]-L-cysteine methyl ester + H2O = [protein]-C-terminal S-[(2E,6E)-farnesyl]-L-cysteine + methanol + H(+). Functionally, catalyzes the demethylation of isoprenylcysteine methylesters. May be involved in the regulation of ABA signaling. This chain is Probable isoprenylcysteine alpha-carbonyl methylesterase ICMEL1, found in Arabidopsis thaliana (Mouse-ear cress).